We begin with the raw amino-acid sequence, 524 residues long: DNA damage-binding protein CMR1 (524 aa).

Positions 35–79 are disordered; that stretch reads EKIIPKPAPPKPKRASAPRAKREPVKRETARPTRQSSRLAGLDAD. Over residues 54–65 the composition is skewed to basic and acidic residues; sequence AKREPVKRETAR. 7 WD repeats span residues 184 to 225, 245 to 285, 295 to 332, 336 to 376, 385 to 425, 447 to 490, and 493 to 524; these read LVPQ…VKAE, THSR…STEA, LPIS…STAE, LTDQ…GKGD, THDS…KWTA, GRWV…LAQL, and DGIT…CLWM.

The protein belongs to the WD repeat DDB2/WDR76 family.

In terms of biological role, DNA-binding protein that binds to both single- and double-stranded DNA. Binds preferentially to UV-damaged DNA. May be involved in DNA-metabolic processes. This is DNA damage-binding protein CMR1 from Chaetomium globosum (strain ATCC 6205 / CBS 148.51 / DSM 1962 / NBRC 6347 / NRRL 1970) (Soil fungus).